The sequence spans 141 residues: Hemoglobin subunit alpha-A (141 aa).

The region spanning 1–141 is the Globin domain; sequence VLSAADKNNV…VGNVLTAKYR (141 aa). Histidine 58 is an O2 binding site. Residue histidine 87 coordinates heme b.

Belongs to the globin family. As to quaternary structure, heterotetramer of two alpha chains and two beta chains. Red blood cells.

Its function is as follows. Involved in oxygen transport from the lung to the various peripheral tissues. In Francolinus pondicerianus (Grey francolin), this protein is Hemoglobin subunit alpha-A (HBAA).